The primary structure comprises 114 residues: Probable acid stress chaperone HdeA (114 aa).

The N-terminal stretch at 1-26 (MIKALFNKNTALAAVTILALSGGAMA) is a signal peptide. Cysteine 46 and cysteine 94 are joined by a disulfide.

It belongs to the HdeA family.

Its subcellular location is the periplasm. Its function is as follows. Required for optimal acid stress protection. Exhibits a chaperone-like activity only at low pH by suppressing non-specifically the aggregation of denaturated periplasmic proteins. The sequence is that of Probable acid stress chaperone HdeA from Brucella suis biovar 1 (strain 1330).